A 165-amino-acid polypeptide reads, in one-letter code: MTIHIEKETEVNFDFNEEVLIKEVIEAALDYEECPYETEINVVLTNNEEIKEINKEYREIDAPTDVLSFPMVEFNEPSDFEHVEEEQEDCFHPDSGELMLGDIIVSVDKVFSQAKEFGHSEKRELGFLIAHSMLHLCGYDHMEEEEREVMEERQRAILDRIHLSR.

Zn(2+)-binding residues include His-131, His-135, and His-141.

This sequence belongs to the endoribonuclease YbeY family. Zn(2+) is required as a cofactor.

The protein localises to the cytoplasm. Functionally, single strand-specific metallo-endoribonuclease involved in late-stage 70S ribosome quality control and in maturation of the 3' terminus of the 16S rRNA. This is Endoribonuclease YbeY from Lachnoclostridium phytofermentans (strain ATCC 700394 / DSM 18823 / ISDg) (Clostridium phytofermentans).